A 485-amino-acid polypeptide reads, in one-letter code: MSSPSPSSEAAAAHHHHHQRRQHAGAAGGSGLVPLAALIKEEARAERPMGSGSRICARDEEDGGGGGGAEGGRRWRRPLLRYGCAAQSKKGEDFFLLRTDCARPSTSSSSSSSLASSPPHTFAVFAVLDGHNGNAAAIYTRDNLLNHVLSAMPRGLSREEWLHALPRALVAGFVKTDKEFQHKGQTSGTTATFVIIDGWTITVASVGDSRCILDAQGGAVSLLTVDHRLEENVEERERVTASGGEVGRLSVVGGAEIGPLRCWPGGLCLSRSIGDIDVGEFIVPVPYVKQVKLSNAGGRLIIASDGIWDALSSEAAAKCCRGLPAELAAKQVVKEALRTRGLKDDTTCIVVDMIPPDQTIRHPSPPKKINKLKSLIFRKKTKDHPNKLTKQLSAAGMVEELFEEGSAMLSERLGNDSSGRRTSSSLFTCAICQVDLEPSEGISVHAGSIFSSSSSKPWEGPFLCSDCRDKKDAMEGKRPSGVKVL.

Positions 1–11 (MSSPSPSSEAA) are enriched in low complexity. Disordered regions lie at residues 1-29 (MSSP…AAGG) and 43-72 (ARAE…AEGG). Residues 13–23 (AHHHHHQRRQH) show a composition bias toward basic residues. In terms of domain architecture, PPM-type phosphatase spans 107–353 (SSSSSSSLAS…DDTTCIVVDM (247 aa)). Positions 129, 130, 305, and 344 each coordinate Mn(2+).

The protein belongs to the PP2C family. Requires Mg(2+) as cofactor. It depends on Mn(2+) as a cofactor.

The enzyme catalyses O-phospho-L-seryl-[protein] + H2O = L-seryl-[protein] + phosphate. The catalysed reaction is O-phospho-L-threonyl-[protein] + H2O = L-threonyl-[protein] + phosphate. The sequence is that of Probable protein phosphatase 2C 3 from Oryza sativa subsp. japonica (Rice).